A 176-amino-acid polypeptide reads, in one-letter code: ATP synthase subunit b (176 aa).

The helical transmembrane segment at Val-26 to Gly-45 threads the bilayer.

This sequence belongs to the ATPase B chain family. In terms of assembly, F-type ATPases have 2 components, F(1) - the catalytic core - and F(0) - the membrane proton channel. F(1) has five subunits: alpha(3), beta(3), gamma(1), delta(1), epsilon(1). F(0) has four main subunits: a(1), b(1), b'(1) and c(10-14). The alpha and beta chains form an alternating ring which encloses part of the gamma chain. F(1) is attached to F(0) by a central stalk formed by the gamma and epsilon chains, while a peripheral stalk is formed by the delta, b and b' chains.

The protein localises to the cellular thylakoid membrane. Functionally, f(1)F(0) ATP synthase produces ATP from ADP in the presence of a proton or sodium gradient. F-type ATPases consist of two structural domains, F(1) containing the extramembraneous catalytic core and F(0) containing the membrane proton channel, linked together by a central stalk and a peripheral stalk. During catalysis, ATP synthesis in the catalytic domain of F(1) is coupled via a rotary mechanism of the central stalk subunits to proton translocation. In terms of biological role, component of the F(0) channel, it forms part of the peripheral stalk, linking F(1) to F(0). This chain is ATP synthase subunit b, found in Synechococcus sp. (strain PCC 6716).